We begin with the raw amino-acid sequence, 238 residues long: MPVRLYLIWGATTTGKTAQSVALARSAGAPVISLDRVQCCHELAVGSGRPSPSELLGTRREYLCEREVSRGVVSAAEANQLLLDKVARYATQERALILEGGSVSLINAMIRDARWSERGEWILRRIPVPGRAAFMAAARKRVREMLDPPPGQAGILDELQGLWGYPRNHAVLEDIDGYRQIIRYANALQVPICRITSIDPNAKALLIERIAQEYWEHALWQEQEFLGIPASWMRADDA.

The protein belongs to the isopentenyl transferase family.

The catalysed reaction is dimethylallyl diphosphate + AMP = N(6)-(dimethylallyl)adenosine 5'-phosphate + diphosphate. Transfers dimethylallyl groups to AMP as part of the biosynthesis of cytokinin phytohormones. This chain is Adenylate dimethylallyltransferase (tzs), found in Ralstonia nicotianae (strain ATCC BAA-1114 / GMI1000) (Ralstonia solanacearum).